The following is a 154-amino-acid chain: 6,7-dimethyl-8-ribityllumazine synthase (154 aa).

5-amino-6-(D-ribitylamino)uracil-binding positions include 22 to 23 (FN), 56 to 58 (SWE), and 80 to 82 (VLI). 85–86 (AT) contacts (2S)-2-hydroxy-3-oxobutyl phosphate. The active-site Proton donor is the H88. 5-amino-6-(D-ribitylamino)uracil is bound at residue F113. Residue R127 coordinates (2S)-2-hydroxy-3-oxobutyl phosphate. K135 provides a ligand contact to 5-amino-6-(D-ribitylamino)uracil.

Belongs to the DMRL synthase family. In terms of assembly, forms an icosahedral capsid composed of 60 subunits, arranged as a dodecamer of pentamers.

The enzyme catalyses (2S)-2-hydroxy-3-oxobutyl phosphate + 5-amino-6-(D-ribitylamino)uracil = 6,7-dimethyl-8-(1-D-ribityl)lumazine + phosphate + 2 H2O + H(+). The protein operates within cofactor biosynthesis; riboflavin biosynthesis; riboflavin from 2-hydroxy-3-oxobutyl phosphate and 5-amino-6-(D-ribitylamino)uracil: step 1/2. In terms of biological role, catalyzes the formation of 6,7-dimethyl-8-ribityllumazine by condensation of 5-amino-6-(D-ribitylamino)uracil with 3,4-dihydroxy-2-butanone 4-phosphate. This is the penultimate step in the biosynthesis of riboflavin. The protein is 6,7-dimethyl-8-ribityllumazine synthase (ribH) of Aquifex aeolicus (strain VF5).